Consider the following 534-residue polypeptide: Lariat debranching enzyme A (534 aa).

4 residues coordinate a divalent metal cation: Cys8, His10, Asp39, and Asn84. Positions Ser124–Arg154 are lariat recognition loop. Positions 174, 226, and 228 each coordinate a divalent metal cation. 2 disordered regions span residues Glu386 to Glu439 and Ser469 to Glu534. Acidic residues predominate over residues Glu388–Ala400. A compositionally biased stretch (polar residues) spans Ser413–Asn424. Residues Ile428–Glu439 show a composition bias toward acidic residues. Positions Glu484–Gln499 are enriched in basic and acidic residues.

Belongs to the lariat debranching enzyme family. Fe(2+) serves as cofactor. It depends on Zn(2+) as a cofactor. Mn(2+) is required as a cofactor.

The protein resides in the nucleus. With respect to regulation, active in presence of diverse metals including Fe(2+), Zn(2+), Mn(2+). Also activated by Ca(2+). Binds two metal cations in two adjacent alpha and beta metal-binding pockets. Functionally, cleaves the 2'-5' phosphodiester linkage at the branch point of excised lariat intron RNA and converts them into linear molecules that can be subsequently degraded, thereby facilitating ribonucleotide turnover. Linked to its role in pre-mRNA processing mechanism, may also participate in retrovirus replication and have an antiviral cell-intrinsic defense function. This is Lariat debranching enzyme A (dbr1-a) from Xenopus laevis (African clawed frog).